Here is a 430-residue protein sequence, read N- to C-terminus: uncharacterized protein (430 aa).

Helical transmembrane passes span 13–33 (FFAALASQMGTTVGNMAFAFF), 47–67 (LAELMYSLPTIFVFLIVGVVA), 88–108 (VVLFFTLFTGNIPLVFCILFI), 138–158 (GLNQMLFSIFMVFGVGIGAFM), 228–248 (LIFGFFIFGFVNGGFAVLPMF), 264–284 (SVFTIALGFGLLAGSVIGTLI), 296–316 (IPIFIAGLLIFVLGYTNILWV), 319–339 (AAAFALGMCIGPINIAIGGWM), 358–378 (FMMFAQSLTLGLVALLFPKFV), and 383–403 (YLYYGMGVIILLVFIFYFIAL).

The protein belongs to the major facilitator superfamily.

It is found in the cell membrane. This is an uncharacterized protein from Bacillus subtilis (strain 168).